Consider the following 301-residue polypeptide: Phosphoribosylaminoimidazole-succinocarboxamide synthase (301 aa).

It belongs to the SAICAR synthetase family.

The catalysed reaction is 5-amino-1-(5-phospho-D-ribosyl)imidazole-4-carboxylate + L-aspartate + ATP = (2S)-2-[5-amino-1-(5-phospho-beta-D-ribosyl)imidazole-4-carboxamido]succinate + ADP + phosphate + 2 H(+). Its pathway is purine metabolism; IMP biosynthesis via de novo pathway; 5-amino-1-(5-phospho-D-ribosyl)imidazole-4-carboxamide from 5-amino-1-(5-phospho-D-ribosyl)imidazole-4-carboxylate: step 1/2. The protein is Phosphoribosylaminoimidazole-succinocarboxamide synthase of Mycolicibacterium vanbaalenii (strain DSM 7251 / JCM 13017 / BCRC 16820 / KCTC 9966 / NRRL B-24157 / PYR-1) (Mycobacterium vanbaalenii).